Consider the following 568-residue polypeptide: N66 matrix protein (568 aa).

An N-terminal signal peptide occupies residues 1 to 22 (MWRMTTLLHLTALLVLIPLCHC). The region spanning 55–567 (AGFSYNRDIC…KHPLRVYKNS (513 aa)) is the Alpha-carbonic anhydrase domain. 3 residues coordinate Zn(2+): His154, His156, and His179. The interval 259–421 (NGNNGNNGNG…NGYNGDNGNS (163 aa)) is disordered. The span at 280–290 (GNNGNGNGNNG) shows a compositional bias: gly residues. Over residues 291–318 (YNGNNGYNGNNGNNGNGNNDNNGNDNNG) the composition is skewed to low complexity. 2 stretches are compositionally biased toward gly residues: residues 319–352 (NNGGNGNNGNNGNGNNGNNGNGNNGNNGGNGNNG) and 362–380 (NGNGNNGNNGGNGNNGNNG). N-linked (GlcNAc...) asparagine glycosylation is present at Asn389. Over residues 390–413 (GSNGNNGGNGNNGNNGDNGNGDNG) the composition is skewed to gly residues. Residue 506-507 (TT) participates in substrate binding. Asn511 carries an N-linked (GlcNAc...) asparagine glycan.

It belongs to the alpha-carbonic anhydrase family. Homooligomer; disulfide-linked. May also be disulfide-linked to insoluble organic matrix. It depends on Zn(2+) as a cofactor. In terms of tissue distribution, expressed in both the dorsal region of the mantle and the mantle edge. Is dispersed in calcium carbonate and also linked by disulfide bonds to the organic core of nacre.

Its subcellular location is the secreted. The protein localises to the extracellular space. It is found in the extracellular matrix. The enzyme catalyses hydrogencarbonate + H(+) = CO2 + H2O. In terms of biological role, acts as a negative regulator for calcification in the shells of mollusks. May function both as a calcium concentrator and as a carbonic anhydrase required for production of carbonate ions, which are assembled to CaCO(3) at mineralization sites. Is important for shell formation in both the calcitic prismatic layer and the aragonitic nacreous layer. The polypeptide is N66 matrix protein (Pinctada maxima (Silver-lipped pearl oyster)).